The following is a 192-amino-acid chain: Iron sulfur cluster assembly protein 1, mitochondrial (192 aa).

The N-terminal 53 residues, 1-53 (MSVFRRSVQCVGVLPSILAQRSSLLARPANLQFLKTNSSKFVPQVTANVSRRM), are a transit peptide targeting the mitochondrion.

This sequence belongs to the NifU family. In terms of assembly, homodimer. Component of the core Fe-S cluster (ISC) assembly machinery. The cofactor is [2Fe-2S] cluster.

Its subcellular location is the mitochondrion. The protein resides in the mitochondrion matrix. The protein operates within cofactor biosynthesis; iron-sulfur cluster biosynthesis. Functionally, scaffold protein for the de novo synthesis of iron-sulfur (Fe-S) clusters within mitochondria, which is required for maturation of both mitochondrial and cytoplasmic [2Fe-2S] and [4Fe-4S] proteins. First, a [2Fe-2S] cluster is transiently assembled on the scaffold protein isu1. In a second step, the cluster is released from isu1, transferred to a glutaredoxin, followed by the formation of mitochondrial [2Fe-2S] proteins, the synthesis of [4Fe-4S] clusters and their target-specific insertion into the recipient apoproteins. Cluster assembly on isu1 depends on the function of the cysteine desulfurase complex nfs1-isd11, which serves as the sulfur donor for cluster synthesis, the iron-binding protein frataxin as the putative iron donor, and the electron transfer chain comprised of ferredoxin reductase and ferredoxin, which receive their electrons from NADH. This Schizosaccharomyces pombe (strain 972 / ATCC 24843) (Fission yeast) protein is Iron sulfur cluster assembly protein 1, mitochondrial (isu1).